Here is a 160-residue protein sequence, read N- to C-terminus: Protransforming growth factor alpha (160 aa).

Residues 1 to 23 form the signal peptide; the sequence is MVPSAGQFALFALGILLAVCQAL. Residues 24–39 constitute a propeptide, removed in mature form; that stretch reads ENSTSALSADPPIAAA. The Extracellular portion of the chain corresponds to 24–98; the sequence is ENSTSALSAD…AVVAASQKKQ (75 aa). N-linked (GlcNAc...) asparagine glycosylation occurs at Asn25. One can recognise an EGF-like domain in the interval 43–83; the sequence is HFNDCPDSHSQFCFHGTCRFLVQEDKPACVCHSGYVGARCE. 3 disulfide bridges follow: Cys47–Cys60, Cys55–Cys71, and Cys73–Cys82. Residues 90 to 160 constitute a propeptide, removed in mature form; the sequence is VVAASQKKQA…TACCHSETVV (71 aa). A helical transmembrane segment spans residues 99 to 124; it reads AITALVVVSIVALAVLIITCVLIHCC. Residues 125–160 lie on the Cytoplasmic side of the membrane; sequence QVRKHCEWCRALICRHEKPSALLKGRTACCHSETVV. S-palmitoyl cysteine attachment occurs at residues Cys153 and Cys154.

In terms of assembly, interacts with the PDZ domains of MAGI3, SDCBP and SNTA1. The interaction with SDCBP, is required for the targeting to the cell surface. In the endoplasmic reticulum, in its immature form (i.e. with a prosegment and lacking full N-glycosylation), interacts with CNIH. In the Golgi apparatus, may form a complex with CNIH and GORASP2. Interacts (via cytoplasmic C-terminal domain) with NKD2.

The protein resides in the secreted. It localises to the extracellular space. The protein localises to the cell membrane. In terms of biological role, TGF alpha is a mitogenic polypeptide that is able to bind to the EGF receptor/EGFR and to act synergistically with TGF beta to promote anchorage-independent cell proliferation in soft agar. This Sus scrofa (Pig) protein is Protransforming growth factor alpha (TGFA).